Reading from the N-terminus, the 102-residue chain is Large ribosomal subunit protein bL21 (102 aa).

The protein belongs to the bacterial ribosomal protein bL21 family. In terms of assembly, part of the 50S ribosomal subunit. Contacts protein L20.

Its function is as follows. This protein binds to 23S rRNA in the presence of protein L20. This Ehrlichia ruminantium (strain Gardel) protein is Large ribosomal subunit protein bL21.